The sequence spans 49 residues: uncharacterized protein (49 aa).

Residues 31-48 (PDLYTIIVSYFSIFSLFF) traverse the membrane as a helical segment.

Its subcellular location is the membrane. This is an uncharacterized protein from Saccharomyces cerevisiae (strain ATCC 204508 / S288c) (Baker's yeast).